We begin with the raw amino-acid sequence, 226 residues long: Octanoyltransferase (226 aa).

The 183-residue stretch at 34-216 (GEANELVWLL…AWTEAFGPVR (183 aa)) folds into the BPL/LPL catalytic domain. Substrate contacts are provided by residues 73–80 (RGGEYTYH), 145–147 (AIG), and 158–160 (GIA). The active-site Acyl-thioester intermediate is the C176.

The protein belongs to the LipB family.

Its subcellular location is the cytoplasm. It catalyses the reaction octanoyl-[ACP] + L-lysyl-[protein] = N(6)-octanoyl-L-lysyl-[protein] + holo-[ACP] + H(+). It participates in protein modification; protein lipoylation via endogenous pathway; protein N(6)-(lipoyl)lysine from octanoyl-[acyl-carrier-protein]: step 1/2. In terms of biological role, catalyzes the transfer of endogenously produced octanoic acid from octanoyl-acyl-carrier-protein onto the lipoyl domains of lipoate-dependent enzymes. Lipoyl-ACP can also act as a substrate although octanoyl-ACP is likely to be the physiological substrate. The sequence is that of Octanoyltransferase from Maricaulis maris (strain MCS10) (Caulobacter maris).